A 159-amino-acid chain; its full sequence is 17.7 kDa class I heat shock protein (159 aa).

The 115-residue stretch at 45–159 (DAAAFAGARI…PDVKSIQISG (115 aa)) folds into the sHSP domain.

It belongs to the small heat shock protein (HSP20) family. As to quaternary structure, may form oligomeric structures.

It localises to the cytoplasm. This Oryza sativa subsp. japonica (Rice) protein is 17.7 kDa class I heat shock protein (HSP17.7).